Consider the following 582-residue polypeptide: ABC transporter-like protein ECU11_1340 (582 aa).

Residues 15–257 (VPNQNLSSNE…LGTKGIHNDG (243 aa)) enclose the ABC transporter domain. An ATP-binding site is contributed by 47 to 54 (GTSGSGKT). Residues 316–519 (YVSFQMAIRQ…EIDAFISNFF (204 aa)) enclose the ABC transmembrane type-2 domain. The next 6 helical transmembrane spans lie at 335 to 355 (ILYS…GKYI), 359 to 378 (FSIA…YVMN), 412 to 432 (TLVS…FGLI), 436 to 456 (HAFL…SMLF), 482 to 502 (GALL…SVIP), and 551 to 571 (SFLR…SSIL).

It belongs to the ABC transporter superfamily.

It is found in the membrane. The protein is ABC transporter-like protein ECU11_1340 of Encephalitozoon cuniculi (strain GB-M1) (Microsporidian parasite).